The sequence spans 283 residues: MAARQVSLGSITFANDAPFVLIGGVNVLESQQFALDAAAVYADVCRRLSIPLVFKASFDKANRSSIHSFRGPGLSDGLAMLQAVKDTHGIPVITDVHTPEQAAPAAEVCDIIQLPAFLARQTDLVQAMAGTGAVINIKKPQFLSPSQMANVVEKFRECGNEQLLICERGSNFGYDNLVVDMLGFGVMKRCCDDLPLIFDVTHALQCRDPGGAASGGRRSQVLDLARAGMAVGLAGLFLEAHPDPSQARCDGPSALPLHQLEPFLSQLKAVDDLVKSLPALTIQ.

The protein belongs to the KdsA family.

It is found in the cytoplasm. The catalysed reaction is D-arabinose 5-phosphate + phosphoenolpyruvate + H2O = 3-deoxy-alpha-D-manno-2-octulosonate-8-phosphate + phosphate. It participates in carbohydrate biosynthesis; 3-deoxy-D-manno-octulosonate biosynthesis; 3-deoxy-D-manno-octulosonate from D-ribulose 5-phosphate: step 2/3. It functions in the pathway bacterial outer membrane biogenesis; lipopolysaccharide biosynthesis. This chain is 2-dehydro-3-deoxyphosphooctonate aldolase, found in Synechococcus sp. (strain WH7803).